The primary structure comprises 102 residues: NADH-quinone oxidoreductase subunit K 1 (102 aa).

3 consecutive transmembrane segments (helical) span residues 3 to 23, 29 to 49, and 62 to 82; these read TLTT…LGIL, VGML…FMAF, and IIAL…LSII.

Belongs to the complex I subunit 4L family. As to quaternary structure, NDH-1 is composed of 14 different subunits. Subunits NuoA, H, J, K, L, M, N constitute the membrane sector of the complex.

It is found in the cell inner membrane. The enzyme catalyses a quinone + NADH + 5 H(+)(in) = a quinol + NAD(+) + 4 H(+)(out). Functionally, NDH-1 shuttles electrons from NADH, via FMN and iron-sulfur (Fe-S) centers, to quinones in the respiratory chain. The immediate electron acceptor for the enzyme in this species is believed to be ubiquinone. Couples the redox reaction to proton translocation (for every two electrons transferred, four hydrogen ions are translocated across the cytoplasmic membrane), and thus conserves the redox energy in a proton gradient. The chain is NADH-quinone oxidoreductase subunit K 1 from Syntrophobacter fumaroxidans (strain DSM 10017 / MPOB).